The sequence spans 72 residues: Conotoxin LvVIA (72 aa).

The signal sequence occupies residues 1 to 17 (VLIIAVLFLTASELVTA). Positions 18-41 (DYTRDKWQYRAASLRDAMRNFRDT) are excised as a propeptide. Disulfide bonds link Cys-44–Cys-58, Cys-51–Cys-63, and Cys-57–Cys-70.

This sequence belongs to the conotoxin O1 superfamily. As to expression, expressed by the venom duct.

It localises to the secreted. In Conus lividus (Livid cone), this protein is Conotoxin LvVIA.